Consider the following 549-residue polypeptide: Cation/acetate symporter ActP (549 aa).

The next 13 membrane-spanning stretches (helical) occupy residues 33-53 (WQAIIMFLIFVVFTLGITYWA), 77-97 (LAIAGDYMSAASFLGISALVF), 103-123 (GLIYSLGFLVGWPIILFLIAE), 148-168 (ILSACGSLVVVALYLIAQMVG), 183-203 (IAVVLVGVLMMMYVLFGGMLA), 206-226 (WVQIIKAVLLLFGASFMAFMV), 262-282 (ISALSLGLGLMFGTAGLPHIL), 303-323 (GFMGYFYILTFIIGFGAIMLV), 355-375 (LFLGFISAVAFATILAVVAGL), 404-424 (VSKITVLVLGVIAIILGVLFE), 428-448 (IAFMVGLAFAIAASCNFPIIL), 464-484 (GGWLGLLTAVVLMILGPTIWV), and 493-513 (IFPYEYPALFSISVAFLGIWF).

The protein belongs to the sodium:solute symporter (SSF) (TC 2.A.21) family.

The protein resides in the cell inner membrane. In terms of biological role, transports acetate. The chain is Cation/acetate symporter ActP from Salmonella arizonae (strain ATCC BAA-731 / CDC346-86 / RSK2980).